The sequence spans 124 residues: Transcription initiation factor IIA subunit 2 (124 aa).

The protein belongs to the TFIIA subunit 2 family. In terms of assembly, TFIIA is a heterodimer composed of the large TOA1 and the small TOA2 subunits.

It localises to the nucleus. TFIIA is a component of the transcription machinery of RNA polymerase II and plays an important role in transcriptional activation. TFIIA in a complex with tbp mediates transcriptional activity. The polypeptide is Transcription initiation factor IIA subunit 2 (TOA2) (Cryptococcus neoformans var. neoformans serotype D (strain JEC21 / ATCC MYA-565) (Filobasidiella neoformans)).